A 313-amino-acid chain; its full sequence is NF-kappa-B inhibitor delta (313 aa).

ANK repeat units follow at residues 48–83 (EGDTLLHLFAARGLRWAAYAAAEVLQVYRRLDIREH), 84–113 (KGKTPLLVAAAANQPLIVEDLLNLGAEPNA), 117–146 (QGRSVLHVAATYGLPGVLLAVLNSGVQVDL), 152–201 (EGLT…NHTS), 206–236 (SNKTVLHLAVQAANPTLVQLLLELPRGDLRT), and 243–276 (HGNTALHMAAALPPGPAQEAIVRHLLAAGADPTL).

Belongs to the NF-kappa-B inhibitor family. Interacts with NFKB1, RELA and RELB; in the nucleus.

Its subcellular location is the nucleus. Its function is as follows. Regulates the expression of IL-2, IL-6, and other cytokines through regulation on NF-kappa-B activity. Functions in the regulation of inflammatory responses. Involved in the induction of T helper 17 cells (Th17) differentiation upon recognition of antigen by T cell antigen receptor (TCR). May also regulate TCR-induced negative selection of thymocytes. The sequence is that of NF-kappa-B inhibitor delta (NFKBID) from Homo sapiens (Human).